Reading from the N-terminus, the 502-residue chain is MSRFISTFRSSSAQLSIVLAVILATGCSQPTTLQEIREEGVLHVITRVAPSIYYQDREQDTGYDYELARLFANELGVELRVRVADDNSEILSVLSRNYAHVGLAGLTQRPDFDNQYRSVPIGVSAQSVIVYHKEVPAPESLEDLASETIHMLADSNHEHLIADPANEAGPIIQKHPGLDAAGLLARVESGEFGYAAVASNELDLNHVFFPKVYEAFALNEPSDLVWLFPAAQDDTLVNAAEAFMERVNNNGTMAQLAERFYGHLDRLNYVGARTFMHHVENRLPRYQSLFKDYAQESGMDWRLLAAIGYQESHWRPNAVSPTGVRGLMMLTRTTANYIGINNRLDAEESIEGGARYFRMVHGRIPDRIPEPDRTWFALASYNVGFGHLEDARRLAESAGKDPDRWMDVKEFLPLLAQKEWYTKTRFGYARGHEPVVYVQNIRRYYDVLVRITEPDAPSASGLEDQLAWLGDNEAGPEAPAKESQPDLRADLPPELRLIPPTL.

Residues 1-33 (MSRFISTFRSSSAQLSIVLAVILATGCSQPTTL) form the signal peptide. The tract at residues 34–264 (QEIREEGVLH…QLAERFYGHL (231 aa)) is non-LT domain. The LT domain stretch occupies residues 265-502 (DRLNYVGART…PELRLIPPTL (238 aa)). Glu311 is an active-site residue. Residues 457–502 (PSASGLEDQLAWLGDNEAGPEAPAKESQPDLRADLPPELRLIPPTL) are disordered. A compositionally biased stretch (basic and acidic residues) spans 479–493 (PAKESQPDLRADLPP).

In the N-terminal section; belongs to the bacterial solute-binding protein 3 family. The protein in the C-terminal section; belongs to the transglycosylase Slt family.

The protein localises to the cell outer membrane. It catalyses the reaction Exolytic cleavage of the (1-&gt;4)-beta-glycosidic linkage between N-acetylmuramic acid (MurNAc) and N-acetylglucosamine (GlcNAc) residues in peptidoglycan, from either the reducing or the non-reducing ends of the peptidoglycan chains, with concomitant formation of a 1,6-anhydrobond in the MurNAc residue.. In terms of biological role, murein-degrading enzyme that degrades murein glycan strands and insoluble, high-molecular weight murein sacculi, with the concomitant formation of a 1,6-anhydromuramoyl product. Lytic transglycosylases (LTs) play an integral role in the metabolism of the peptidoglycan (PG) sacculus. Their lytic action creates space within the PG sacculus to allow for its expansion as well as for the insertion of various structures such as secretion systems and flagella. The polypeptide is Membrane-bound lytic murein transglycosylase F (Marinobacter nauticus (strain ATCC 700491 / DSM 11845 / VT8) (Marinobacter aquaeolei)).